Here is a 177-residue protein sequence, read N- to C-terminus: Large ribosomal subunit protein uL6 (177 aa).

This sequence belongs to the universal ribosomal protein uL6 family. In terms of assembly, part of the 50S ribosomal subunit.

Its function is as follows. This protein binds to the 23S rRNA, and is important in its secondary structure. It is located near the subunit interface in the base of the L7/L12 stalk, and near the tRNA binding site of the peptidyltransferase center. The protein is Large ribosomal subunit protein uL6 of Salmonella newport (strain SL254).